The chain runs to 229 residues: MSAPAEVFSLLKQCADGNVLLSLSSPEGAAYTTTVWALDPARGLLCLSADGGDIKLQRLLESEEVVAVGYLDSVKLQFDLHDLVLVHSGRASALNARFPRELYRFQRRGSYRVRPLLNTSPTATLRHPALPDMQLSLRVLDVSIGGVALFLPDDVPPIEPGVQIAQVQVDLDGDTRLQSGLIVHHVTLLHHESRGARLGCEMLNLGGDGERALQRYIDQTQKRRRLLSL.

Residues 134–218 enclose the PilZ domain; that stretch reads QLSLRVLDVS…GERALQRYID (85 aa).

The protein belongs to the YcgR family. Monomer. Interacts with the flagellar basal bodies.

The protein resides in the bacterial flagellum basal body. Acts as a flagellar brake, regulating swimming and swarming in a bis-(3'-5') cyclic diguanylic acid (c-di-GMP)-dependent manner. Binds 1 c-di-GMP dimer per subunit. Increasing levels of c-di-GMP lead to decreased motility. This Methylibium petroleiphilum (strain ATCC BAA-1232 / LMG 22953 / PM1) protein is Flagellar brake protein YcgR.